The following is a 431-amino-acid chain: MTKIANIKAREVLDSRGNPTVEADVILEDGTLGRACAPSGASTGSREALELRDGDASRYLGKGVRKAVEAINGQIRDALLGKDAADQRSLDQIMIDLDGTENKANLGANAILAVSLAAAKAAAVSLGKPLYEHIADVNGTSGKFSMPVPMMNILNGGEHADNNVDIQEFMVQPVSVNSFGEALRVGAEIFHSLKKVLKAQGLNTAVGDEGGFAPNLPSNEAALAAIKEAVEKAGYELGKDVTLALDCASSEFYKDGQYQLSGEGKSFDSEGFADYLSGLCDRYPIVSIEDGMDESDWDGWKVLTDKLGSKVQLVGDDLFVTNTKILKQGIEKGIGNSILIKFNQIGSLTETLDAIKMAQDAGYTAVISHRSGETEDTTIADLAVATCAGQIKTGSLCRSDRVAKYNQLLRIEEALEGKAPYRGLSEIKGQG.

Gln-167 is a (2R)-2-phosphoglycerate binding site. The active-site Proton donor is Glu-209. The Mg(2+) site is built by Asp-246, Glu-289, and Asp-316. Residues Lys-341, Arg-370, Ser-371, and Lys-392 each coordinate (2R)-2-phosphoglycerate. The Proton acceptor role is filled by Lys-341.

This sequence belongs to the enolase family. Component of the RNA degradosome, a multiprotein complex involved in RNA processing and mRNA degradation. Mg(2+) serves as cofactor.

The protein resides in the cytoplasm. The protein localises to the secreted. It localises to the cell surface. It catalyses the reaction (2R)-2-phosphoglycerate = phosphoenolpyruvate + H2O. The protein operates within carbohydrate degradation; glycolysis; pyruvate from D-glyceraldehyde 3-phosphate: step 4/5. In terms of biological role, catalyzes the reversible conversion of 2-phosphoglycerate (2-PG) into phosphoenolpyruvate (PEP). It is essential for the degradation of carbohydrates via glycolysis. In Marinobacter nauticus (strain ATCC 700491 / DSM 11845 / VT8) (Marinobacter aquaeolei), this protein is Enolase.